Reading from the N-terminus, the 316-residue chain is HTH-type transcriptional regulator PecT (316 aa).

Positions leucine 11 to threonine 68 constitute an HTH lysR-type domain. The segment at residues phenylalanine 28–glutamine 47 is a DNA-binding region (H-T-H motif). Residues leucine 293–threonine 316 form a disordered region. The segment covering serine 301–threonine 316 has biased composition (basic and acidic residues).

It belongs to the LysR transcriptional regulatory family.

Functionally, regulates pectinase gene expression. The protein is HTH-type transcriptional regulator PecT (pecT) of Dickeya dadantii (strain 3937) (Erwinia chrysanthemi (strain 3937)).